A 381-amino-acid polypeptide reads, in one-letter code: Succinyl-diaminopimelate desuccinylase (381 aa).

Residue His-68 participates in Zn(2+) binding. Asp-70 is an active-site residue. Zn(2+) is bound at residue Asp-101. The active-site Proton acceptor is the Glu-135. The Zn(2+) site is built by Glu-136, Glu-164, and His-350.

This sequence belongs to the peptidase M20A family. DapE subfamily. In terms of assembly, homodimer. Requires Zn(2+) as cofactor. It depends on Co(2+) as a cofactor.

It carries out the reaction N-succinyl-(2S,6S)-2,6-diaminopimelate + H2O = (2S,6S)-2,6-diaminopimelate + succinate. It participates in amino-acid biosynthesis; L-lysine biosynthesis via DAP pathway; LL-2,6-diaminopimelate from (S)-tetrahydrodipicolinate (succinylase route): step 3/3. Catalyzes the hydrolysis of N-succinyl-L,L-diaminopimelic acid (SDAP), forming succinate and LL-2,6-diaminopimelate (DAP), an intermediate involved in the bacterial biosynthesis of lysine and meso-diaminopimelic acid, an essential component of bacterial cell walls. The protein is Succinyl-diaminopimelate desuccinylase of Neisseria meningitidis serogroup A / serotype 4A (strain DSM 15465 / Z2491).